The chain runs to 81 residues: Photosystem I iron-sulfur center (81 aa).

4Fe-4S ferredoxin-type domains follow at residues 2–31 (SHSV…MVPW) and 37–68 (GQIA…VRVY). Cys-11, Cys-14, Cys-17, Cys-21, Cys-48, Cys-51, Cys-54, and Cys-58 together coordinate [4Fe-4S] cluster.

The eukaryotic PSI reaction center is composed of at least 11 subunits. It depends on [4Fe-4S] cluster as a cofactor.

The protein localises to the plastid. The protein resides in the chloroplast thylakoid membrane. It carries out the reaction reduced [plastocyanin] + hnu + oxidized [2Fe-2S]-[ferredoxin] = oxidized [plastocyanin] + reduced [2Fe-2S]-[ferredoxin]. In terms of biological role, apoprotein for the two 4Fe-4S centers FA and FB of photosystem I (PSI); essential for photochemical activity. FB is the terminal electron acceptor of PSI, donating electrons to ferredoxin. The C-terminus interacts with PsaA/B/D and helps assemble the protein into the PSI complex. Required for binding of PsaD and PsaE to PSI. PSI is a plastocyanin/cytochrome c6-ferredoxin oxidoreductase, converting photonic excitation into a charge separation, which transfers an electron from the donor P700 chlorophyll pair to the spectroscopically characterized acceptors A0, A1, FX, FA and FB in turn. This Euglena gracilis protein is Photosystem I iron-sulfur center.